A 343-amino-acid polypeptide reads, in one-letter code: D-beta-hydroxybutyrate dehydrogenase, mitochondrial (343 aa).

A mitochondrion-targeting transit peptide spans 1–46 (MLAARLSRPLSQLPGKALSVCDRENGTRHTLLFYPASFSPDTRRTY). An NAD(+)-binding site is contributed by 59–83 (LVTGCDSGFGFSLAKHLHSKGFLVF). At Lys73 the chain carries N6-acetyllysine. The residue at position 103 (Lys103) is an N6-acetyllysine; alternate. Lys103 carries the N6-succinyllysine; alternate modification. N6-acetyllysine is present on residues Lys132 and Lys177. Ser195 contributes to the substrate binding site. Catalysis depends on Tyr208, which acts as the Proton acceptor. Lys212 bears the N6-acetyllysine mark. O-linked (GlcNAc) serine glycosylation is present at Ser219. The residue at position 246 (Ser246) is a Phosphoserine. An N6-acetyllysine modification is found at Lys258. Lys259 carries the N6-acetyllysine; alternate modification. The residue at position 259 (Lys259) is an N6-succinyllysine; alternate. Lys280 is subject to N6-acetyllysine.

The protein belongs to the short-chain dehydrogenases/reductases (SDR) family. In terms of assembly, homotetramer. In terms of tissue distribution, expressed in liver.

The protein localises to the mitochondrion inner membrane. The protein resides in the mitochondrion matrix. It carries out the reaction (R)-3-hydroxybutanoate + NAD(+) = acetoacetate + NADH + H(+). With respect to regulation, requires phosphatidylcholine as an allosteric activator for enzymatic activity. The sequence is that of D-beta-hydroxybutyrate dehydrogenase, mitochondrial from Rattus norvegicus (Rat).